The sequence spans 141 residues: Hemoglobin subunit alpha (141 aa).

Residues V1–R141 enclose the Globin domain. S3 is subject to Phosphoserine. Residue K7 is modified to N6-succinyllysine. T8 carries the post-translational modification Phosphothreonine. An N6-succinyllysine modification is found at K11. Position 16 is an N6-acetyllysine; alternate (K16). N6-succinyllysine; alternate is present on K16. Y24 bears the Phosphotyrosine mark. S35 is subject to Phosphoserine. Position 40 is an N6-succinyllysine (K40). S49 is modified (phosphoserine). O2 is bound at residue H58. H87 provides a ligand contact to heme b. Phosphoserine is present on S102. The residue at position 108 (T108) is a Phosphothreonine. Residues S124 and S131 each carry the phosphoserine modification. Residues T134 and T137 each carry the phosphothreonine modification. Residue S138 is modified to Phosphoserine.

This sequence belongs to the globin family. As to quaternary structure, heterotetramer of two alpha chains and two beta chains. As to expression, red blood cells.

Its function is as follows. Involved in oxygen transport from the lung to the various peripheral tissues. The protein is Hemoglobin subunit alpha of Tamiasciurus hudsonicus (American red squirrel).